A 213-amino-acid chain; its full sequence is UPF0502 protein Daro_2469 (213 aa).

This sequence belongs to the UPF0502 family.

The chain is UPF0502 protein Daro_2469 from Dechloromonas aromatica (strain RCB).